Reading from the N-terminus, the 893-residue chain is Sulfate permease 2 (893 aa).

The interval 1–25 (MSREGYPNFEEVEIPDFQETNNTVP) is disordered. The Cytoplasmic segment spans residues 1 to 131 (MSREGYPNFE…VFPIINWLPH (131 aa)). Residues 132–152 (YNFSWFTADLIAGITIGCVLV) form a helical membrane-spanning segment. Residues 153-163 (PQSMSYAQVAT) lie on the Extracellular side of the membrane. A helical membrane pass occupies residues 164–184 (LPAQYGLYSSFIGAYSYSFFA). The Cytoplasmic segment spans residues 185-188 (TSKD). A helical membrane pass occupies residues 189-209 (VCIGPVAVMSLQTAKVIADVT). At 210–221 (AKYPDGDSAITG) the chain is on the extracellular side. A helical membrane pass occupies residues 222–242 (PVIATTLALLCGIISAAVGFL). Residues 243-244 (RL) lie on the Cytoplasmic side of the membrane. A helical transmembrane segment spans residues 245–265 (GFLVELISLNAVAGFMTGSAF). Residues 266-305 (NILWGQVPALMGYNSLVNTRAATYKVVIETLKHLPDTKLD) are Extracellular-facing. Residues 306-326 (AVFGLIPLFLLYVWKWWCGTY) traverse the membrane as a helical segment. Residues 327–350 (GPRLNDRYNSKNPRLHKIIKWTYF) lie on the Cytoplasmic side of the membrane. A helical transmembrane segment spans residues 351-371 (YAQASRNGIIIIVFTCIGWAI). The Extracellular portion of the chain corresponds to 372–399 (TRGKSKSERPISILGSVPSGLKEVGVFH). The helical transmembrane segment at 400–420 (VPPGLMSKLGPNLPASIIVLL) threads the bilayer. Residues 421 to 443 (LEHIAISKSFGRINDYKVVPDQE) are Cytoplasmic-facing. The helical transmembrane segment at 444-464 (LIAIGVSNLLGTFFNAYPATG) threads the bilayer. Residues 465-483 (SFSRSALKAKCNVRTPLSG) are Extracellular-facing. The chain crosses the membrane as a helical span at residues 484-504 (LFSGSCVLLALYCLTGAFFYI). The Cytoplasmic segment spans residues 505 to 532 (PKATLSAVIIHAVSDLLASYQTTWNFWK). Residues 533-551 (MNPLDFICFIVTVLITVFA) traverse the membrane as a helical segment. The Extracellular portion of the chain corresponds to 552–559 (SIEDGIYF). The helical transmembrane segment at 560-580 (AMCWSCAMLILKVAFPAGKFL) threads the bilayer. Residues 581–893 (GRVEVAEVTD…DIPDFAKWDI (313 aa)) are Cytoplasmic-facing. One can recognise an STAS domain in the interval 676 to 854 (DVQILPPPDG…SIVAGHTSYH (179 aa)).

This sequence belongs to the SLC26A/SulP transporter (TC 2.A.53) family.

The protein localises to the membrane. Its function is as follows. High affinity uptake of sulfate into the cell. The chain is Sulfate permease 2 (SUL2) from Saccharomyces cerevisiae (strain ATCC 204508 / S288c) (Baker's yeast).